The chain runs to 191 residues: Small ribosomal subunit protein eS7y (191 aa).

At Met-1 the chain carries N-acetylmethionine. Residues 17–50 (TEFEEQVTQALFDLENTNQELKSELKDLYINQAV) are a coiled coil.

This sequence belongs to the eukaryotic ribosomal protein eS7 family.

The chain is Small ribosomal subunit protein eS7y (RPS7B) from Arabidopsis thaliana (Mouse-ear cress).